The sequence spans 716 residues: Fatty acid oxidation complex subunit alpha (716 aa).

Residues 1–189 form an enoyl-CoA hydratase/isomerase region; the sequence is MIYQSPTIQV…KVGAVDAVVA (189 aa). D296 provides a ligand contact to substrate. The interval 311–716 is 3-hydroxyacyl-CoA dehydrogenase; sequence KDVKSAAVLG…AANNGSYYQA (406 aa). NAD(+)-binding positions include M324, D343, 400–402, K407, and S429; that span reads VVE. The active-site For 3-hydroxyacyl-CoA dehydrogenase activity is H450. NAD(+) is bound at residue N453. N500 and Y660 together coordinate substrate.

In the N-terminal section; belongs to the enoyl-CoA hydratase/isomerase family. The protein in the C-terminal section; belongs to the 3-hydroxyacyl-CoA dehydrogenase family. Heterotetramer of two alpha chains (FadB) and two beta chains (FadA).

It catalyses the reaction a (3S)-3-hydroxyacyl-CoA + NAD(+) = a 3-oxoacyl-CoA + NADH + H(+). The catalysed reaction is a (3S)-3-hydroxyacyl-CoA = a (2E)-enoyl-CoA + H2O. The enzyme catalyses a 4-saturated-(3S)-3-hydroxyacyl-CoA = a (3E)-enoyl-CoA + H2O. It carries out the reaction (3S)-3-hydroxybutanoyl-CoA = (3R)-3-hydroxybutanoyl-CoA. It catalyses the reaction a (3Z)-enoyl-CoA = a 4-saturated (2E)-enoyl-CoA. The catalysed reaction is a (3E)-enoyl-CoA = a 4-saturated (2E)-enoyl-CoA. It participates in lipid metabolism; fatty acid beta-oxidation. Functionally, involved in the aerobic and anaerobic degradation of long-chain fatty acids via beta-oxidation cycle. Catalyzes the formation of 3-oxoacyl-CoA from enoyl-CoA via L-3-hydroxyacyl-CoA. It can also use D-3-hydroxyacyl-CoA and cis-3-enoyl-CoA as substrate. The protein is Fatty acid oxidation complex subunit alpha of Shewanella sp. (strain ANA-3).